Reading from the N-terminus, the 327-residue chain is Probable cell division protein WhiA (327 aa).

The segment at residues 277–310 (EELGRLADPPMTKDAVAGRIRRLLSMADRKAKQD) is a DNA-binding region (H-T-H motif). The interval 304-327 (DRKAKQDGIPDTESAVTPDLLEDA) is disordered.

Belongs to the WhiA family.

Its function is as follows. Involved in cell division and chromosome segregation. This Mycolicibacterium vanbaalenii (strain DSM 7251 / JCM 13017 / BCRC 16820 / KCTC 9966 / NRRL B-24157 / PYR-1) (Mycobacterium vanbaalenii) protein is Probable cell division protein WhiA.